The sequence spans 175 residues: CASP-like protein 2C1 (175 aa).

Over 1–7 (MVKLRET) the chain is Cytoplasmic. The chain crosses the membrane as a helical span at residues 8-28 (EVILRLCIVFFLLLTSCLIGL). Over 29 to 45 (DSQTKEIAYIHKNVSFR) the chain is Extracellular. N-linked (GlcNAc...) asparagine glycosylation is present at asparagine 41. Residues 46 to 66 (YLLALEAELYIDVVVAAYNLV) traverse the membrane as a helical segment. Residues 67 to 91 (QLGLGWYNVEQKTSNPKWFSYLLDQ) are Cytoplasmic-facing. The helical transmembrane segment at 92–112 (TAAYVVFAGTSAAAQHSLLVV) threads the bilayer. Residues 113-136 (TGSRELQWMKWCYKFTRFCFQMGS) are Extracellular-facing. The chain crosses the membrane as a helical span at residues 137-157 (AIILNYIAAALMVLLSSISAF). Residues 158–175 (NLFRLYSPKRFFRFKSSS) are Cytoplasmic-facing.

This sequence belongs to the Casparian strip membrane proteins (CASP) family. Homodimer and heterodimers.

Its subcellular location is the cell membrane. This chain is CASP-like protein 2C1, found in Arabidopsis thaliana (Mouse-ear cress).